Here is a 60-residue protein sequence, read N- to C-terminus: Protein P7 (60 aa).

Residues 28–48 traverse the membrane as a helical segment; sequence FIGVTLIGMFISYYLYALISI.

It is found in the host membrane. The sequence is that of Protein P7 from Vitis vinifera (Grape).